We begin with the raw amino-acid sequence, 159 residues long: Biogenesis of lysosome-related organelles complex 1 subunit 2 (159 aa).

The tract at residues 1 to 37 (MDKPTTSAAAAAAQDSNLLPDSPQHGPTLSSASSFEA) is disordered. A compositionally biased stretch (polar residues) spans 14-36 (QDSNLLPDSPQHGPTLSSASSFE). A coiled-coil region spans residues 69 to 134 (EDYKLLEEMN…KLEAAAYKLD (66 aa)).

The protein belongs to the BLOC1S2 family. As to quaternary structure, homodimer. Component of the biogenesis of lysosome-related organelles complex-1 (BLOC-1) composed of Blos1, Blos2, Blos3, Blos4, Dysb, Muted, Pldn and Snapin. Interacts with Snapin.

Component of the biogenesis of lysosome-related organelles complex-1 (BLOC-1) involved in pigment granule biogenesis. This Drosophila melanogaster (Fruit fly) protein is Biogenesis of lysosome-related organelles complex 1 subunit 2.